The sequence spans 132 residues: Small ribosomal subunit protein uS8 (132 aa).

This sequence belongs to the universal ribosomal protein uS8 family. Part of the 30S ribosomal subunit. Contacts proteins S5 and S12.

Its function is as follows. One of the primary rRNA binding proteins, it binds directly to 16S rRNA central domain where it helps coordinate assembly of the platform of the 30S subunit. The protein is Small ribosomal subunit protein uS8 of Flavobacterium johnsoniae (strain ATCC 17061 / DSM 2064 / JCM 8514 / BCRC 14874 / CCUG 350202 / NBRC 14942 / NCIMB 11054 / UW101) (Cytophaga johnsonae).